The chain runs to 89 residues: MSRTVFCQYEQRDAEGLDFVPYPGELGQRIFNNIGKQAWAAWLAHQTMLINENRLSPRTPEHRAFLEGELVKFLFEKDAEKPAGFTPEA.

Belongs to the Fe(2+)-trafficking protein family.

Could be a mediator in iron transactions between iron acquisition and iron-requiring processes, such as synthesis and/or repair of Fe-S clusters in biosynthetic enzymes. The chain is Probable Fe(2+)-trafficking protein from Stenotrophomonas maltophilia (strain R551-3).